The chain runs to 476 residues: Acyl-lipid omega-13 desaturase (476 aa).

The region spanning 10–75 (GPALPSIPHQ…HLRVLERFRV (66 aa)) is the Cytochrome b5 heme-binding domain. Residues histidine 37 and histidine 60 each coordinate heme. The next 2 helical transmembrane spans lie at 146 to 166 (PFVI…KLWW) and 168 to 188 (GAFI…AAMV). The Histidine box-1 signature appears at 189-193 (HDGGH). The short motif at 224-229 (HNILHH) is the Histidine box-2 element. Transmembrane regions (helical) follow at residues 267–287 (FFSH…ISPL), 315–335 (YHST…TPFL), and 343–363 (LLLT…IAQV). A Histidine box-3 motif is present at residues 410 to 414 (QSLHH).

The protein belongs to the fatty acid desaturase type 1 family.

The protein resides in the membrane. It catalyses the reaction a (9Z,12Z)-octadecadienoyl-containing glycerolipid + 2 Fe(II)-[cytochrome b5] + O2 + 2 H(+) = a (5Z,9Z,12Z)-octadecatrienoyl-containing glycerolipid + 2 Fe(III)-[cytochrome b5] + 2 H2O. It carries out the reaction (9Z,12Z,15Z)-octadecatrienoyl-containing glycerolipid + 2 Fe(II)-[cytochrome b5] + O2 + 2 H(+) = a (5Z,9Z,12Z,15Z)-octadecatetraenoyl-containing glycerolipid + 2 Fe(III)-[cytochrome b5] + 2 H2O. It participates in lipid metabolism; polyunsaturated fatty acid biosynthesis. In terms of biological role, front-end desaturase having a omega-13 desaturase activity for omega-9 unsaturated C18/C20 fatty acids. Strong substrate preferences for linoleic acid and alpha-linolenic acid for the production of pinolenic and coniferonic acids respectively. No desaturase activity for dihomo gamma-linolenic acid and eicosatertraenoic acid. In Chlamydomonas reinhardtii (Chlamydomonas smithii), this protein is Acyl-lipid omega-13 desaturase.